A 580-amino-acid chain; its full sequence is Arginine--tRNA ligase (580 aa).

Residues 137–147 carry the 'HIGH' region motif; it reads ANPTGPLHIGH.

The protein belongs to the class-I aminoacyl-tRNA synthetase family. In terms of assembly, monomer.

It localises to the cytoplasm. It catalyses the reaction tRNA(Arg) + L-arginine + ATP = L-arginyl-tRNA(Arg) + AMP + diphosphate. This Anaplasma phagocytophilum (strain HZ) protein is Arginine--tRNA ligase.